The primary structure comprises 141 residues: MSQSWQFWALLSAAFAALTAVFAKVGVAQINSDFATLIRTVVILCVIAAIVAATGQWQKPSEIPGRTWLFLALSGLATGASWLAYFRALKLGDAARVAPLDKLSIVMVAIFGVLFLGEKLNLMNWLGVAFIAAGALLLAVF.

Helical transmembrane passes span 7–27, 34–54, 69–89, 97–117, and 121–141; these read FWALLSAAFAALTAVFAKVGV, FATLIRTVVILCVIAAIVAAT, LFLALSGLATGASWLAYFRAL, VAPLDKLSIVMVAIFGVLFLG, and NLMNWLGVAFIAAGALLLAVF. One can recognise an EamA domain in the interval 14-140; it reads AFAALTAVFA…IAAGALLLAV (127 aa).

Belongs to the EamA transporter family.

The protein resides in the cell membrane. This is an uncharacterized protein from Sinorhizobium sp.